Consider the following 256-residue polypeptide: Triosephosphate isomerase (256 aa).

10 to 12 (NWK) lines the substrate pocket. The active-site Electrophile is His-97. Glu-169 acts as the Proton acceptor in catalysis. Residues Gly-175, Ser-214, and 235–236 (GG) contribute to the substrate site.

It belongs to the triosephosphate isomerase family. As to quaternary structure, homodimer.

The protein localises to the cytoplasm. It catalyses the reaction D-glyceraldehyde 3-phosphate = dihydroxyacetone phosphate. Its pathway is carbohydrate biosynthesis; gluconeogenesis. The protein operates within carbohydrate degradation; glycolysis; D-glyceraldehyde 3-phosphate from glycerone phosphate: step 1/1. In terms of biological role, involved in the gluconeogenesis. Catalyzes stereospecifically the conversion of dihydroxyacetone phosphate (DHAP) to D-glyceraldehyde-3-phosphate (G3P). The sequence is that of Triosephosphate isomerase from Haemophilus ducreyi (strain 35000HP / ATCC 700724).